The primary structure comprises 309 residues: 4-hydroxy-3-methylbut-2-enyl diphosphate reductase (309 aa).

Residue Cys-12 participates in [4Fe-4S] cluster binding. His-41 and His-74 together coordinate (2E)-4-hydroxy-3-methylbut-2-enyl diphosphate. Dimethylallyl diphosphate contacts are provided by His-41 and His-74. Residues His-41 and His-74 each coordinate isopentenyl diphosphate. Cys-96 serves as a coordination point for [4Fe-4S] cluster. His-124 contacts (2E)-4-hydroxy-3-methylbut-2-enyl diphosphate. Residue His-124 coordinates dimethylallyl diphosphate. His-124 contributes to the isopentenyl diphosphate binding site. Catalysis depends on Glu-126, which acts as the Proton donor. Thr-167 contacts (2E)-4-hydroxy-3-methylbut-2-enyl diphosphate. Cys-197 contacts [4Fe-4S] cluster. Ser-225, Ser-226, Asn-227, and Ser-269 together coordinate (2E)-4-hydroxy-3-methylbut-2-enyl diphosphate. Dimethylallyl diphosphate contacts are provided by Ser-225, Ser-226, Asn-227, and Ser-269. Isopentenyl diphosphate contacts are provided by Ser-225, Ser-226, Asn-227, and Ser-269.

Belongs to the IspH family. The cofactor is [4Fe-4S] cluster.

It carries out the reaction isopentenyl diphosphate + 2 oxidized [2Fe-2S]-[ferredoxin] + H2O = (2E)-4-hydroxy-3-methylbut-2-enyl diphosphate + 2 reduced [2Fe-2S]-[ferredoxin] + 2 H(+). The catalysed reaction is dimethylallyl diphosphate + 2 oxidized [2Fe-2S]-[ferredoxin] + H2O = (2E)-4-hydroxy-3-methylbut-2-enyl diphosphate + 2 reduced [2Fe-2S]-[ferredoxin] + 2 H(+). It participates in isoprenoid biosynthesis; dimethylallyl diphosphate biosynthesis; dimethylallyl diphosphate from (2E)-4-hydroxy-3-methylbutenyl diphosphate: step 1/1. It functions in the pathway isoprenoid biosynthesis; isopentenyl diphosphate biosynthesis via DXP pathway; isopentenyl diphosphate from 1-deoxy-D-xylulose 5-phosphate: step 6/6. Its function is as follows. Catalyzes the conversion of 1-hydroxy-2-methyl-2-(E)-butenyl 4-diphosphate (HMBPP) into a mixture of isopentenyl diphosphate (IPP) and dimethylallyl diphosphate (DMAPP). Acts in the terminal step of the DOXP/MEP pathway for isoprenoid precursor biosynthesis. In Shewanella pealeana (strain ATCC 700345 / ANG-SQ1), this protein is 4-hydroxy-3-methylbut-2-enyl diphosphate reductase.